A 318-amino-acid chain; its full sequence is MSMPGINVSNLLNEHEELGLRLLAGEKGLTNRINMSEINRPGLSLTGFYESFAHDRIQIFGKGEWAYITSRIPEDLKNIAADFFSFHLNCIIFTHGNMPPSIFTENCERLAIPLMISDVSTHKFITLISGILDRSLAPRTMRHGVLIEVFGIGILLSGKSGVGKSETALELIERGHRLVADDMVEIRRLSESYLIGTCSDLLRHHMEIRGLGILNIKDIFGIGSVRDHKLIELIIRLEEWTEDKDFDRTGLENPTEELLGVQIPLIRVPVKPGRNIPIIVETAAMNQRLRKLGKNAAQEFNQKLSNYLQQGKVERNPP.

Active-site residues include histidine 143 and lysine 164. 158–165 (GKSGVGKS) lines the ATP pocket. Serine 165 serves as a coordination point for Mg(2+). Aspartate 182 (proton acceptor; for phosphorylation activity. Proton donor; for dephosphorylation activity) is an active-site residue. Residues 206–215 (MEIRGLGILN) are important for the catalytic mechanism of both phosphorylation and dephosphorylation. Glutamate 207 contacts Mg(2+). Arginine 248 is a catalytic residue. The interval 269 to 274 (PVKPGR) is important for the catalytic mechanism of dephosphorylation.

Belongs to the HPrK/P family. As to quaternary structure, homohexamer. Mg(2+) is required as a cofactor.

It catalyses the reaction [HPr protein]-L-serine + ATP = [HPr protein]-O-phospho-L-serine + ADP + H(+). The enzyme catalyses [HPr protein]-O-phospho-L-serine + phosphate + H(+) = [HPr protein]-L-serine + diphosphate. Catalyzes the ATP- as well as the pyrophosphate-dependent phosphorylation of a specific serine residue in HPr, a phosphocarrier protein of the phosphoenolpyruvate-dependent sugar phosphotransferase system (PTS). HprK/P also catalyzes the pyrophosphate-producing, inorganic phosphate-dependent dephosphorylation (phosphorolysis) of seryl-phosphorylated HPr (P-Ser-HPr). The sequence is that of HPr kinase/phosphorylase from Leptospira borgpetersenii serovar Hardjo-bovis (strain L550).